We begin with the raw amino-acid sequence, 505 residues long: Probable cytosol aminopeptidase (505 aa).

Mn(2+) is bound by residues Lys269 and Asp274. Lys281 is a catalytic residue. Mn(2+)-binding residues include Asp292, Asp351, and Glu353. Residue Arg355 is part of the active site.

The protein belongs to the peptidase M17 family. Requires Mn(2+) as cofactor.

The protein resides in the cytoplasm. The catalysed reaction is Release of an N-terminal amino acid, Xaa-|-Yaa-, in which Xaa is preferably Leu, but may be other amino acids including Pro although not Arg or Lys, and Yaa may be Pro. Amino acid amides and methyl esters are also readily hydrolyzed, but rates on arylamides are exceedingly low.. It catalyses the reaction Release of an N-terminal amino acid, preferentially leucine, but not glutamic or aspartic acids.. In terms of biological role, presumably involved in the processing and regular turnover of intracellular proteins. Catalyzes the removal of unsubstituted N-terminal amino acids from various peptides. This is Probable cytosol aminopeptidase from Rhodococcus erythropolis (strain PR4 / NBRC 100887).